The sequence spans 397 residues: Na(+)/H(+) antiporter NhaA 3 (397 aa).

11 helical membrane passes run Ala-18–Phe-38, Leu-63–Leu-83, Ile-98–Trp-118, Gly-129–Gly-149, Ile-158–Phe-178, Ser-181–Cys-201, Thr-207–Leu-224, Val-269–Met-289, Leu-306–Trp-326, Gly-340–Phe-360, and Leu-373–Ala-393.

The protein belongs to the NhaA Na(+)/H(+) (TC 2.A.33) antiporter family.

Its subcellular location is the cell inner membrane. The catalysed reaction is Na(+)(in) + 2 H(+)(out) = Na(+)(out) + 2 H(+)(in). In terms of biological role, na(+)/H(+) antiporter that extrudes sodium in exchange for external protons. This Saccharophagus degradans (strain 2-40 / ATCC 43961 / DSM 17024) protein is Na(+)/H(+) antiporter NhaA 3.